Here is a 28-residue protein sequence, read N- to C-terminus: Cyclotide ltri-A (28 aa).

Residues 1-28 (GVACGESCVYLPCFTVGCTCTSSQCFKN) constitute a cross-link (cyclopeptide (Gly-Asn)). Intrachain disulfides connect cysteine 4/cysteine 18, cysteine 8/cysteine 20, and cysteine 13/cysteine 25.

Belongs to the cyclotide family. Bracelet subfamily. This is a cyclic peptide.

Its function is as follows. Probably participates in a plant defense mechanism. In Leonia triandra, this protein is Cyclotide ltri-A.